We begin with the raw amino-acid sequence, 467 residues long: Rhamnulokinase (467 aa).

Residue 11 to 15 (ASSGR) participates in ATP binding. Substrate contacts are provided by residues alanine 78 and 235–237 (HDT). Aspartate 236 (proton acceptor) is an active-site residue. Threonine 257 serves as a coordination point for ATP. Asparagine 294 is a binding site for substrate. Glutamine 302 provides a ligand contact to ATP. An intrachain disulfide couples cysteine 351 to cysteine 368. Position 400 (glycine 400) interacts with ATP.

This sequence belongs to the rhamnulokinase family. Requires Mg(2+) as cofactor.

The catalysed reaction is L-rhamnulose + ATP = L-rhamnulose 1-phosphate + ADP + H(+). It participates in carbohydrate degradation; L-rhamnose degradation; glycerone phosphate from L-rhamnose: step 2/3. Involved in the catabolism of L-rhamnose (6-deoxy-L-mannose). Catalyzes the transfer of the gamma-phosphate group from ATP to the 1-hydroxyl group of L-rhamnulose to yield L-rhamnulose 1-phosphate. This chain is Rhamnulokinase, found in Halalkalibacterium halodurans (strain ATCC BAA-125 / DSM 18197 / FERM 7344 / JCM 9153 / C-125) (Bacillus halodurans).